The sequence spans 323 residues: DNA-directed RNA polymerase subunit alpha 1 (323 aa).

Residues 1–228 (MSNNNSKLEF…EQISVFVSLR (228 aa)) form an alpha N-terminal domain (alpha-NTD) region. The tract at residues 244-323 (IDPILLKPID…DNFRELVEGK (80 aa)) is alpha C-terminal domain (alpha-CTD).

The protein belongs to the RNA polymerase alpha chain family. Homodimer. The RNAP catalytic core consists of 2 alpha, 1 beta, 1 beta' and 1 omega subunit. When a sigma factor is associated with the core the holoenzyme is formed, which can initiate transcription.

It catalyses the reaction RNA(n) + a ribonucleoside 5'-triphosphate = RNA(n+1) + diphosphate. DNA-dependent RNA polymerase catalyzes the transcription of DNA into RNA using the four ribonucleoside triphosphates as substrates. This is DNA-directed RNA polymerase subunit alpha 1 from Francisella tularensis subsp. tularensis (strain FSC 198).